The primary structure comprises 309 residues: Protoheme IX farnesyltransferase (309 aa).

9 helical membrane-spanning segments follow: residues 30–49, 53–75, 98–118, 123–143, 151–171, 178–198, 224–244, 247–267, and 285–305; these read VMSLVVFTALVGILVAPGGV, IGFTAILFIALGAGASGALNMWY, AGEALTLGLWLSAISVAMLGL, VAAGLLAFTIFFYAVVYSMWL, IVIGGAAGSFPPMIGWAAVTG, VLMFGIIFMWTPPHFWALALF, ILIYTILLVPVALGLVLTEVA, VYLITALVCNAIFLKGAYDIW, and VFKFSLLYLFLHFGALLLDAI.

This sequence belongs to the UbiA prenyltransferase family. Protoheme IX farnesyltransferase subfamily. In terms of assembly, interacts with CtaA.

It is found in the cell inner membrane. The catalysed reaction is heme b + (2E,6E)-farnesyl diphosphate + H2O = Fe(II)-heme o + diphosphate. Its pathway is porphyrin-containing compound metabolism; heme O biosynthesis; heme O from protoheme: step 1/1. Functionally, converts heme B (protoheme IX) to heme O by substitution of the vinyl group on carbon 2 of heme B porphyrin ring with a hydroxyethyl farnesyl side group. The chain is Protoheme IX farnesyltransferase from Jannaschia sp. (strain CCS1).